Consider the following 66-residue polypeptide: MPKMKTKTAAKKRFKITGTGKVKAAAAGKRHGMIKRSNKFIRDARGTMVLADADAKIVKQFLPNGL.

The protein belongs to the bacterial ribosomal protein bL35 family.

This Brucella canis (strain ATCC 23365 / NCTC 10854 / RM-666) protein is Large ribosomal subunit protein bL35.